The primary structure comprises 61 residues: Small ribosomal subunit protein uS14 (61 aa).

The Zn(2+) site is built by Cys24, Cys27, Cys40, and Cys43.

Belongs to the universal ribosomal protein uS14 family. Zinc-binding uS14 subfamily. As to quaternary structure, part of the 30S ribosomal subunit. Contacts proteins S3 and S10. Zn(2+) is required as a cofactor.

Its function is as follows. Binds 16S rRNA, required for the assembly of 30S particles and may also be responsible for determining the conformation of the 16S rRNA at the A site. This Campylobacter hominis (strain ATCC BAA-381 / DSM 21671 / CCUG 45161 / LMG 19568 / NCTC 13146 / CH001A) protein is Small ribosomal subunit protein uS14.